The following is a 655-amino-acid chain: MDYTLTREESKLLMELLGLPMEQYGNFPLMRKAFLQKCKIMHPDKGGDEQTAKMLISLYKKLESEVKSLNTDDGFSTEEIPTYGSAEWEQWWQTFNEDFDLFCHETFTVSDDEEEGGEKRKHSDEEEPSCSQATPPKKKKTSSAPKDMPELLRNFLSNAILSNKTLTCFLVYTTLEKSSLLYSKLSEKFKPTFISRHKLDNEGLIFLITPSKHRVSAITNFCSNLCSVSFLIVKAVIKEYSCYCALCVEPFVLVVENIPGGLNSDFFDAPQEASKNVSWKLIGEYALSIMCDDLFLLLGLYKEFAVNPSTCSKCDQKVIVDHYKYHSLHYANAMLFTDCKNQKAICQQAVDGVLAFRRVQTAQLTRKQLLAKRFEYHFNKLEQVFSAKSEVCIETYMAGVCWFECLLPEVNMKNFILQYLECVVQNVPKKRFWCFTGPVNTGKTTLAAALLDLCGGKSLNVNMPFDKLNFELGVAIDQFTVVFEDVKGQSENKNLPTGQGISNLDNLRDYLDGAVKVNLEKKHLNKKTQIFPPGIVTANEYIFPLTLKVRFCKIIKFIYQQHLFKSLKKTELLTKHRVLQSGLTLLLLLVFHCDVEDFLSELHPLVTKWRENINHEVSWSRYLEMKENVMNGLNILEKQQDSGIFTQTQDTECQQ.

Residue M1 is modified to N-acetylmethionine; by host. Positions 12–84 (LLMELLGLPM…FSTEEIPTYG (73 aa)) constitute a J domain. The LXCXE motif motif lies at 101–105 (LFCHE). The residue at position 110 (S110) is a Phosphoserine; by host. The disordered stretch occupies residues 110–145 (SDDEEEGGEKRKHSDEEEPSCSQATPPKKKKTSSAP). T134 carries the post-translational modification Phosphothreonine; by host. The short motif at 135 to 142 (PPKKKKTS) is the Nuclear localization signal element. Residues 149 to 264 (PELLRNFLSN…VENIPGGLNS (116 aa)) constitute a DNA-binding region (T-ag OBD). The segment at 274–366 (SKNVSWKLIG…RRVQTAQLTR (93 aa)) adopts a T-ag D1-type zinc-finger fold. Zn(2+)-binding residues include C311, C314, H322, and H326. The region spanning 411 to 570 (NMKNFILQYL…QHLFKSLKKT (160 aa)) is the SF3 helicase domain. Residue 437 to 444 (GPVNTGKT) participates in ATP binding.

Forms homohexamers in the presence of ATP. Interacts with host HDAC1. Interacts (via LXCXE domain) with host RB1; the interaction induces the aberrant dissociation of RB1-E2F1 complex thereby disrupting RB1's activity. Interacts (via LXCXE domain) with host pRB-related proteins RBL1 and RBL2. Interacts (via C-terminus) with host TOP1 and POLA1 allowing DNA replication. Interacts with host TP53, inhibiting TP53 binding to DNA. Interacts with host preinitiation complex components TBP, TFIIA and TFIID to regulate transcription initiation. Mg(2+) is required as a cofactor. Post-translationally, phosphorylated on both serine and threonine residues. Small t antigen inhibits the dephosphorylation by the AC form of PP2A. O-Glycosylated near the C-terminal region. In terms of processing, acetylated by CBP in a TP53-dependent manner.

The protein resides in the host nucleus. It catalyses the reaction Couples ATP hydrolysis with the unwinding of duplex DNA by translocating in the 3'-5' direction.. It carries out the reaction ATP + H2O = ADP + phosphate + H(+). In terms of biological role, isoform large T antigen is a key early protein essential for both driving viral replication and inducing cellular transformation. Plays a role in viral genome replication by driving entry of quiescent cells into the cell cycle and by autoregulating the synthesis of viral early mRNA. Displays highly oncogenic activities by corrupting the host cellular checkpoint mechanisms that guard cell division and the transcription, replication, and repair of DNA. Participates in the modulation of cellular gene expression preceeding viral DNA replication. This step involves binding to host key cell cycle regulators retinoblastoma protein RB1/pRb and TP53. Induces the disassembly of host E2F1 transcription factors from RB1, thus promoting transcriptional activation of E2F1-regulated S-phase genes. Inhibits host TP53 binding to DNA, abrogating the ability of TP53 to stimulate gene expression. Plays the role of a TFIID-associated factor (TAF) in transcription initiation for all three RNA polymerases, by stabilizing the TBP-TFIIA complex on promoters. Initiates viral DNA replication and unwinding via interactions with the viral origin of replication. Binds two adjacent sites in the SV40 origin. The replication fork movement is facilitated by Large T antigen helicase activity. Has processive 3'-5' DNA helicase activity which requires a short 3' single-stranded region and ATP. Activates the transcription of viral late mRNA, through host TBP and TFIIA stabilization. Interferes with histone deacetylation mediated by HDAC1, leading to activation of transcription. The chain is Large T antigen (large T) from Saimiri boliviensis boliviensis (Bolivian squirrel monkey).